Consider the following 481-residue polypeptide: Acetyltransferase peniE (481 aa).

Catalysis depends on proton acceptor residues His-164 and Asp-411.

The protein belongs to the plant acyltransferase family. Monomer.

Its function is as follows. Acetyltransferase; part of the gene cluster that mediates the biosynthesis of penifulvin A, a potent insecticidal sesquiterpene that features a [5.5.5.6]dioxafenestrane ring. The first step of the pathway is performed by the sesquiterpene cyclase peniA that generates the angular triquinane scaffold silphinene via cyclization of the linear farnesyl pyrophosphate (FPP). The cytochrome P450 monooxygenase peniB and the flavin-dependent monooxygenase peniC then catalyze a series of oxidation reactions to transform silphinene into penifulvin A. The dioxygenases peniD and peniF, as well as the acetyltransferase peniE, do not seem to be involved in the biosynthesis of penifulvin A. The protein is Acetyltransferase peniE of Penicillium patulum (Penicillium griseofulvum).